An 81-amino-acid chain; its full sequence is MSHSVKIYDTCIGCTQCVRACPLDVLEMVPWDGCKAAQIASSPRTEDCVGCKRCETACPTDFLSIRVYLGAETTRSMGLAY.

2 4Fe-4S ferredoxin-type domains span residues 2 to 31 (SHSVKIYDTCIGCTQCVRACPLDVLEMVPW) and 39 to 68 (IASSPRTEDCVGCKRCETACPTDFLSIRVY). The [4Fe-4S] cluster site is built by Cys-11, Cys-14, Cys-17, Cys-21, Cys-48, Cys-51, Cys-54, and Cys-58.

As to quaternary structure, the cyanobacterial PSI reaction center is composed of one copy each of PsaA,B,C,D,E,F,I,J,K,L,M and X, and forms trimeric complexes. [4Fe-4S] cluster is required as a cofactor.

It localises to the cellular thylakoid membrane. The enzyme catalyses reduced [plastocyanin] + hnu + oxidized [2Fe-2S]-[ferredoxin] = oxidized [plastocyanin] + reduced [2Fe-2S]-[ferredoxin]. Functionally, apoprotein for the two 4Fe-4S centers FA and FB of photosystem I (PSI); essential for photochemical activity. FB is the terminal electron acceptor of PSI, donating electrons to ferredoxin. The C-terminus interacts with PsaA/B/D and helps assemble the protein into the PSI complex. Required for binding of PsaD and PsaE to PSI. PSI is a plastocyanin/cytochrome c6-ferredoxin oxidoreductase, converting photonic excitation into a charge separation, which transfers an electron from the donor P700 chlorophyll pair to the spectroscopically characterized acceptors A0, A1, FX, FA and FB in turn. In terms of biological role, mutant proteins with a 3Fe-4S center are unable to reconstitute PSI activity in vivo. This chain is Photosystem I iron-sulfur center, found in Synechocystis sp. (strain ATCC 27184 / PCC 6803 / Kazusa).